We begin with the raw amino-acid sequence, 94 residues long: Antitoxin HipB (94 aa).

An HTH cro/C1-type domain is found at 23-77 (MKLVRQQNGWTQSELAKKIGIKQATISNFENNPDNTSLTTFFKILQSLELSMTLC). Residues 34 to 53 (QSELAKKIGIKQATISNFEN) constitute a DNA-binding region (H-T-H motif).

In terms of assembly, homodimer. Forms a HipA(2)HipB(2) heterotetramer which can interact with DNA. This complex also blocks the toxic activity of HipA.

Functionally, antitoxin component of a type II type II toxin-antitoxin (TA) system. Neutralizes the toxic effect of cognate toxin HipA. Represses the hipBA operon promoter. The polypeptide is Antitoxin HipB (hipB) (Escherichia coli O6:H1 (strain CFT073 / ATCC 700928 / UPEC)).